The primary structure comprises 63 residues: UPF0370 protein ECA1289 (63 aa).

The chain crosses the membrane as a helical span at residues 3–23; sequence WLADYWWIILIILIGMLINGI. The interval 39–63 is disordered; that stretch reads PKLPPHRDNNDKWDNEEDDWPKKKP.

This sequence belongs to the UPF0370 family.

It localises to the cell membrane. The sequence is that of UPF0370 protein ECA1289 from Pectobacterium atrosepticum (strain SCRI 1043 / ATCC BAA-672) (Erwinia carotovora subsp. atroseptica).